A 109-amino-acid chain; its full sequence is FK506-binding protein (109 aa).

In terms of domain architecture, PPIase FKBP-type spans G20 to Y108.

This sequence belongs to the FKBP-type PPIase family.

The enzyme catalyses [protein]-peptidylproline (omega=180) = [protein]-peptidylproline (omega=0). Its activity is regulated as follows. Inhibited by FK506. In terms of biological role, PPIases accelerate the folding of proteins. The protein is FK506-binding protein (fbp) of Neisseria meningitidis serogroup B (strain ATCC BAA-335 / MC58).